The sequence spans 290 residues: UPF0750 membrane protein YdeO (290 aa).

The next 5 membrane-spanning stretches (helical) occupy residues 18-38, 56-76, 83-103, 112-132, and 165-185; these read IIMVIIGGIIAAYGLETVLIP, LFNLPLGILIAVINIPFVWLG, SFALLSIIGIVSLAAGTSFFH, DTLLITVVGGIILGFGMGLAL, and LFVFIFVSTVFGLQGALLSVI.

Belongs to the UPF0750 family.

It is found in the cell membrane. The sequence is that of UPF0750 membrane protein YdeO (ydeO) from Bacillus subtilis (strain 168).